We begin with the raw amino-acid sequence, 28 residues long: Cliotide T21 (28 aa).

A cross-link (cyclopeptide (Asp-Asn)) is located at residues 1–28 (DLQCAETCVHSPCIGPCYCKHGLICYRN). Intrachain disulfides connect Cys-4–Cys-17, Cys-8–Cys-19, and Cys-13–Cys-25.

Post-translationally, contains 3 disulfide bonds. This is a cyclic peptide. Expressed in root nodules but not in seed.

In terms of biological role, probably participates in a plant defense mechanism. Not active against Gram-negative bacterium E.coli ATCC 700926 or Gram-positive bacterium S.aureus ATCC 12600 up to a concentration of 100 uM under low-salt conditions. The sequence is that of Cliotide T21 from Clitoria ternatea (Butterfly pea).